A 164-amino-acid polypeptide reads, in one-letter code: S-ribosylhomocysteine lyase (164 aa).

Residues histidine 61, histidine 65, and cysteine 131 each contribute to the Fe cation site.

This sequence belongs to the LuxS family. As to quaternary structure, homodimer. Fe cation serves as cofactor.

The enzyme catalyses S-(5-deoxy-D-ribos-5-yl)-L-homocysteine = (S)-4,5-dihydroxypentane-2,3-dione + L-homocysteine. In terms of biological role, involved in the synthesis of autoinducer 2 (AI-2) which is secreted by bacteria and is used to communicate both the cell density and the metabolic potential of the environment. The regulation of gene expression in response to changes in cell density is called quorum sensing. Catalyzes the transformation of S-ribosylhomocysteine (RHC) to homocysteine (HC) and 4,5-dihydroxy-2,3-pentadione (DPD). In Bifidobacterium longum subsp. infantis (strain ATCC 15697 / DSM 20088 / JCM 1222 / NCTC 11817 / S12), this protein is S-ribosylhomocysteine lyase.